We begin with the raw amino-acid sequence, 484 residues long: Glutamyl-tRNA(Gln) amidotransferase subunit A (484 aa).

Catalysis depends on charge relay system residues K76 and S151. The Acyl-ester intermediate role is filled by S175.

Belongs to the amidase family. GatA subfamily. As to quaternary structure, heterotrimer of A, B and C subunits.

The catalysed reaction is L-glutamyl-tRNA(Gln) + L-glutamine + ATP + H2O = L-glutaminyl-tRNA(Gln) + L-glutamate + ADP + phosphate + H(+). Functionally, allows the formation of correctly charged Gln-tRNA(Gln) through the transamidation of misacylated Glu-tRNA(Gln) in organisms which lack glutaminyl-tRNA synthetase. The reaction takes place in the presence of glutamine and ATP through an activated gamma-phospho-Glu-tRNA(Gln). This is Glutamyl-tRNA(Gln) amidotransferase subunit A from Hahella chejuensis (strain KCTC 2396).